The sequence spans 469 residues: Type II secretion system protein HxcR (469 aa).

246–253 (GPTGSGKT) is a binding site for ATP.

Belongs to the GSP E family.

It is found in the cytoplasm. It catalyses the reaction ATP + H2O + cellular proteinSide 1 = ADP + phosphate + cellular proteinSide 2.. Functionally, ATPase component of the type II secretion system required for the energy-dependent secretion of extracellular factors from the periplasm. Acts as a molecular motor to provide the energy that is required for the export of proteins. The Hxc system is involved in the secretion of low-molecular-weight alkaline phosphatase L-AP (LapA). Is probably also involved in the secretion of the phosphate-binding protein PstS. This Pseudomonas aeruginosa (strain ATCC 15692 / DSM 22644 / CIP 104116 / JCM 14847 / LMG 12228 / 1C / PRS 101 / PAO1) protein is Type II secretion system protein HxcR.